Consider the following 338-residue polypeptide: MSTLRLLISDSYDPWFNLAVEECIFRQMPATQRVLFLWRNADTVVIGRAQNPWKECNTRRMEEDNVRLARRSSGGGAVFHDLGNTCFTFMAGKPEYDKTISTSIVLNALNALGVSAEASGRNDLVVKTAEGDRKVSGSAYRETKDRGFHHGTLLLNADLSRLANYLNPDKKKLAAKGITSVRSRVTNLTELLPGITHEQVCEAITKAFFAHYGERVEAEIISPDKTPDLPNFAETFARQSSWEWNFGQAPAFSHLLDERFSWGGVELHFDVEKGHITRAQVFTDSLNPAPLEALAGRLQGGLYRADMLQQECEALLVDFPDQEKELRELSTWIAGAVR.

Positions 29–216 (PATQRVLFLW…AFFAHYGERV (188 aa)) constitute a BPL/LPL catalytic domain. Residues arginine 71, 76–79 (GAVF), and lysine 134 each bind ATP. A (R)-lipoate-binding site is contributed by lysine 134.

The protein belongs to the LplA family. In terms of assembly, monomer.

It localises to the cytoplasm. It catalyses the reaction L-lysyl-[lipoyl-carrier protein] + (R)-lipoate + ATP = N(6)-[(R)-lipoyl]-L-lysyl-[lipoyl-carrier protein] + AMP + diphosphate + H(+). It functions in the pathway protein modification; protein lipoylation via exogenous pathway; protein N(6)-(lipoyl)lysine from lipoate: step 1/2. It participates in protein modification; protein lipoylation via exogenous pathway; protein N(6)-(lipoyl)lysine from lipoate: step 2/2. Catalyzes both the ATP-dependent activation of exogenously supplied lipoate to lipoyl-AMP and the transfer of the activated lipoyl onto the lipoyl domains of lipoate-dependent enzymes. In Escherichia coli O139:H28 (strain E24377A / ETEC), this protein is Lipoate-protein ligase A.